Reading from the N-terminus, the 1221-residue chain is RNA exonuclease 1 homolog (1221 aa).

Positions arginine 37–glycine 46 are enriched in gly residues. The tract at residues arginine 37–leucine 75 is disordered. The stretch at leucine 86–threonine 115 forms a coiled coil. The tract at residues threonine 116–aspartate 598 is disordered. Arginine 191 carries the post-translational modification Omega-N-methylarginine. 3 positions are modified to phosphoserine: serine 287, serine 289, and serine 358. The span at alanine 357 to glycine 369 shows a compositional bias: low complexity. Basic and acidic residues predominate over residues alanine 393–glycine 417. A phosphoserine mark is found at serine 459, serine 499, and serine 526. The segment covering leucine 492 to aspartate 501 has biased composition (basic and acidic residues). Residues arginine 498–serine 577 form an interaction with ELOA region. The span at proline 580–alanine 593 shows a compositional bias: low complexity. At serine 610 the chain carries Phosphoserine. 2 disordered regions span residues isoleucine 619–glutamate 692 and histidine 735–leucine 775. The span at lysine 627–glycine 648 shows a compositional bias: basic and acidic residues. Serine 914 bears the Phosphoserine mark. An Exonuclease domain is found at isoleucine 1060–valine 1209.

Belongs to the REXO1/REXO3 family. As to quaternary structure, interacts with TCEA2 and ELOA. Ubiquitously expressed.

It is found in the nucleus. Its function is as follows. Seems to have no detectable effect on transcription elongation in vitro. In Homo sapiens (Human), this protein is RNA exonuclease 1 homolog (REXO1).